A 239-amino-acid chain; its full sequence is Myogenic factor 6 (239 aa).

The segment at 28-59 is disordered; sequence PGVSPLYEGNDSPLSPGQDPVPSETGCESSGE. Positions 92-143 constitute a bHLH domain; it reads DRRKAATLRERRRLKKINEAFDALKKKTVPNPNQRLPKVEILRSAINYIEKL. The span at 182–196 shows a compositional bias: polar residues; that stretch reads CQSWQENPDHSSSQM. The tract at residues 182–239 is disordered; it reads CQSWQENPDHSSSQMAGHREGAVLESSESSSLRRLSSIVDSISTEEPKARCPSQISEK. Residues 204–223 are compositionally biased toward low complexity; sequence VLESSESSSLRRLSSIVDSI.

In terms of assembly, efficient DNA binding requires dimerization with another bHLH protein.

The protein resides in the nucleus. In terms of biological role, involved in muscle differentiation (myogenic factor). Induces fibroblasts to differentiate into myoblasts. Probable sequence specific DNA-binding protein. This Danio rerio (Zebrafish) protein is Myogenic factor 6 (myf6).